The primary structure comprises 197 residues: MKVLQEKILSEGKVLSGDVLKVDAFLNHQIDPVLMQEIGKEFAKRFQEEKITKIVTIESSGIAPAVMAALELGVKVIFARKRKSLTLQENMYVANVYSFTKQETNEISLSKKHIHEDDRVLIIDDFLANGQAALGLMSLVEQAGASVSGIGIVIEKAFQDGGKKLRERGVRVESLAEIASLEDGTVTFVQHETAEVR.

Xanthine-binding residues include L20 and N27. 128–132 (ANGQA) contributes to the 5-phospho-alpha-D-ribose 1-diphosphate binding site. K156 is a binding site for xanthine.

It belongs to the purine/pyrimidine phosphoribosyltransferase family. Xpt subfamily. As to quaternary structure, homodimer.

Its subcellular location is the cytoplasm. It catalyses the reaction XMP + diphosphate = xanthine + 5-phospho-alpha-D-ribose 1-diphosphate. It participates in purine metabolism; XMP biosynthesis via salvage pathway; XMP from xanthine: step 1/1. Functionally, converts the preformed base xanthine, a product of nucleic acid breakdown, to xanthosine 5'-monophosphate (XMP), so it can be reused for RNA or DNA synthesis. This is Xanthine phosphoribosyltransferase from Bacillus cytotoxicus (strain DSM 22905 / CIP 110041 / 391-98 / NVH 391-98).